Consider the following 214-residue polypeptide: Pyridoxine/pyridoxamine 5'-phosphate oxidase (214 aa).

Substrate-binding positions include 11-14 (RREY) and K68. FMN contacts are provided by residues 63–68 (RLVLLK), 78–79 (FT), R84, K85, and Q107. The substrate site is built by Y125 and R129. FMN is bound by residues 142–143 (QS) and W187. Residue 193-195 (RLH) participates in substrate binding. R197 is an FMN binding site.

This sequence belongs to the pyridoxamine 5'-phosphate oxidase family. Homodimer. FMN is required as a cofactor.

The enzyme catalyses pyridoxamine 5'-phosphate + O2 + H2O = pyridoxal 5'-phosphate + H2O2 + NH4(+). It catalyses the reaction pyridoxine 5'-phosphate + O2 = pyridoxal 5'-phosphate + H2O2. It participates in cofactor metabolism; pyridoxal 5'-phosphate salvage; pyridoxal 5'-phosphate from pyridoxamine 5'-phosphate: step 1/1. Its pathway is cofactor metabolism; pyridoxal 5'-phosphate salvage; pyridoxal 5'-phosphate from pyridoxine 5'-phosphate: step 1/1. In terms of biological role, catalyzes the oxidation of either pyridoxine 5'-phosphate (PNP) or pyridoxamine 5'-phosphate (PMP) into pyridoxal 5'-phosphate (PLP). The chain is Pyridoxine/pyridoxamine 5'-phosphate oxidase from Blochmanniella floridana.